Here is a 239-residue protein sequence, read N- to C-terminus: Orotidine 5'-phosphate decarboxylase (239 aa).

Substrate is bound by residues aspartate 10, lysine 32, 59–68 (DLKLHDIPNT), threonine 122, arginine 184, glutamine 193, glycine 213, and arginine 214. Lysine 61 (proton donor) is an active-site residue.

This sequence belongs to the OMP decarboxylase family. Type 1 subfamily. Homodimer.

It carries out the reaction orotidine 5'-phosphate + H(+) = UMP + CO2. Its pathway is pyrimidine metabolism; UMP biosynthesis via de novo pathway; UMP from orotate: step 2/2. Its function is as follows. Catalyzes the decarboxylation of orotidine 5'-monophosphate (OMP) to uridine 5'-monophosphate (UMP). The chain is Orotidine 5'-phosphate decarboxylase from Shouchella clausii (strain KSM-K16) (Alkalihalobacillus clausii).